We begin with the raw amino-acid sequence, 86 residues long: Large ribosomal subunit protein eL30 (86 aa).

This sequence belongs to the eukaryotic ribosomal protein eL30 family.

This is Large ribosomal subunit protein eL30 (rpl30e) from Archaeoglobus fulgidus (strain ATCC 49558 / DSM 4304 / JCM 9628 / NBRC 100126 / VC-16).